The primary structure comprises 208 residues: Uracil phosphoribosyltransferase (208 aa).

Residues R78, R103, and 130–138 each bind 5-phospho-alpha-D-ribose 1-diphosphate; that span reads DPMLATGGS. Residues I193 and 198 to 200 each bind uracil; that span reads GDA. A 5-phospho-alpha-D-ribose 1-diphosphate-binding site is contributed by D199.

This sequence belongs to the UPRTase family. Requires Mg(2+) as cofactor.

It carries out the reaction UMP + diphosphate = 5-phospho-alpha-D-ribose 1-diphosphate + uracil. The protein operates within pyrimidine metabolism; UMP biosynthesis via salvage pathway; UMP from uracil: step 1/1. With respect to regulation, allosterically activated by GTP. Catalyzes the conversion of uracil and 5-phospho-alpha-D-ribose 1-diphosphate (PRPP) to UMP and diphosphate. The chain is Uracil phosphoribosyltransferase from Wolinella succinogenes (strain ATCC 29543 / DSM 1740 / CCUG 13145 / JCM 31913 / LMG 7466 / NCTC 11488 / FDC 602W) (Vibrio succinogenes).